Reading from the N-terminus, the 706-residue chain is Elongation factor G (706 aa).

Residues Leu-15–Val-291 enclose the tr-type G domain. GTP is bound by residues Ala-24–Thr-31, Asp-91–His-95, and Asn-145–Asp-148.

The protein belongs to the TRAFAC class translation factor GTPase superfamily. Classic translation factor GTPase family. EF-G/EF-2 subfamily.

The protein localises to the cytoplasm. In terms of biological role, catalyzes the GTP-dependent ribosomal translocation step during translation elongation. During this step, the ribosome changes from the pre-translocational (PRE) to the post-translocational (POST) state as the newly formed A-site-bound peptidyl-tRNA and P-site-bound deacylated tRNA move to the P and E sites, respectively. Catalyzes the coordinated movement of the two tRNA molecules, the mRNA and conformational changes in the ribosome. This is Elongation factor G from Leptospira borgpetersenii serovar Hardjo-bovis (strain L550).